The following is a 548-amino-acid chain: CTP synthase (548 aa).

The segment at 1 to 270 is amidoligase domain; that stretch reads MNRRSCAFIF…DTKISALLGC (270 aa). CTP is bound at residue Ser-17. Ser-17 is a UTP binding site. ATP-binding positions include 18–23 and Asp-75; that span reads SIGKGL. 2 residues coordinate Mg(2+): Asp-75 and Glu-143. CTP contacts are provided by residues 150 to 152, 190 to 195, and Lys-227; these read DIE and KTKPSQ. UTP-binding positions include 190–195 and Lys-227; that span reads KTKPSQ. Residues 305 to 548 enclose the Glutamine amidotransferase type-1 domain; the sequence is YSGLCDAYIS…VRAGLLRKYS (244 aa). Position 356 (Gly-356) interacts with L-glutamine. The active-site Nucleophile; for glutamine hydrolysis is Cys-383. L-glutamine contacts are provided by residues 384 to 387, Glu-407, and Arg-475; that span reads FGFQ. Catalysis depends on residues His-521 and Glu-523.

The protein belongs to the CTP synthase family. In terms of assembly, homotetramer.

The catalysed reaction is UTP + L-glutamine + ATP + H2O = CTP + L-glutamate + ADP + phosphate + 2 H(+). It carries out the reaction L-glutamine + H2O = L-glutamate + NH4(+). It catalyses the reaction UTP + NH4(+) + ATP = CTP + ADP + phosphate + 2 H(+). It participates in pyrimidine metabolism; CTP biosynthesis via de novo pathway; CTP from UDP: step 2/2. Allosterically activated by GTP, when glutamine is the substrate; GTP has no effect on the reaction when ammonia is the substrate. The allosteric effector GTP functions by stabilizing the protein conformation that binds the tetrahedral intermediate(s) formed during glutamine hydrolysis. Inhibited by the product CTP, via allosteric rather than competitive inhibition. Catalyzes the ATP-dependent amination of UTP to CTP with either L-glutamine or ammonia as the source of nitrogen. Regulates intracellular CTP levels through interactions with the four ribonucleotide triphosphates. The polypeptide is CTP synthase (Neorickettsia sennetsu (strain ATCC VR-367 / Miyayama) (Ehrlichia sennetsu)).